Here is a 462-residue protein sequence, read N- to C-terminus: Nuclear distribution protein PAC1 (462 aa).

The LisH domain occupies 9–41 (QAEELHKAIIAYLGVINAPKTAAAFREEVNFSA). A coiled-coil region spans residues 60–87 (TSVVRLQKKVLELEQRNQSLQSELDSTT). Polar residues predominate over residues 78 to 99 (SLQSELDSTTPTSLLRRNQDPS). The tract at residues 78-103 (SLQSELDSTTPTSLLRRNQDPSSWLP) is disordered. WD repeat units follow at residues 113–154 (SHRS…RTVK), 156–196 (HTKG…KNIR), 200–247 (GHDH…CVKT), 250–289 (GHAD…AKCT), 292–352 (GHEH…IKTL), 354–393 (GHDN…RCVK), 398–445 (AHSH…AGIR), and 447–462 (VIAT…IFAS). Residues 414 to 434 (KDAPTNGDAPNGTTANGASKK) form a disordered region.

It belongs to the WD repeat LIS1/nudF family. Self-associates. Interacts with NDL1 and dynein.

The protein localises to the cytoplasm. It is found in the cytoskeleton. The protein resides in the spindle pole. In terms of biological role, positively regulates the activity of the minus-end directed microtubule motor protein dynein. May enhance dynein-mediated microtubule sliding by targeting dynein to the microtubule plus end. Required for nuclear migration during vegetative growth as well as development. Required for retrograde early endosome (EE) transport from the hyphal tip. Required for localization of dynein to the mitotic spindle poles. Recruits additional proteins to the dynein complex at SPBs. In Phaeosphaeria nodorum (strain SN15 / ATCC MYA-4574 / FGSC 10173) (Glume blotch fungus), this protein is Nuclear distribution protein PAC1.